The chain runs to 178 residues: uncharacterized protein (178 aa).

Positions 1–16 (MNKRTSVDASKEDLHP) are enriched in basic and acidic residues. Residues 1-43 (MNKRTSVDASKEDLHPADPQSGEGVPPNRKNTKTSPRGEGTAP) form a disordered region.

This is an uncharacterized protein from Homo sapiens (Human).